The following is a 327-amino-acid chain: ATP-dependent (S)-NAD(P)H-hydrate dehydratase (327 aa).

The region spanning 11-313 (LLTRVKRIIP…RHVGKAYNAL (303 aa)) is the YjeF C-terminal domain. Residues glycine 121 and 174–180 (NVIEFKR) each bind (6S)-NADPHX. ATP contacts are provided by residues 209–213 (KGQSD) and 228–237 (GGLKRCGGQG). A (6S)-NADPHX-binding site is contributed by aspartate 238.

Belongs to the NnrD/CARKD family. It depends on Mg(2+) as a cofactor.

It is found in the cytoplasm. The catalysed reaction is (6S)-NADHX + ATP = ADP + phosphate + NADH + H(+). It carries out the reaction (6S)-NADPHX + ATP = ADP + phosphate + NADPH + H(+). In terms of biological role, catalyzes the dehydration of the S-form of NAD(P)HX at the expense of ATP, which is converted to ADP. Together with NAD(P)HX epimerase, which catalyzes the epimerization of the S- and R-forms, the enzyme allows the repair of both epimers of NAD(P)HX, a damaged form of NAD(P)H that is a result of enzymatic or heat-dependent hydration. This chain is ATP-dependent (S)-NAD(P)H-hydrate dehydratase, found in Schizosaccharomyces pombe (strain 972 / ATCC 24843) (Fission yeast).